A 41-amino-acid polypeptide reads, in one-letter code: Fibrinogen beta chain (41 aa).

The segment at 1-41 (ADDYDDEVLPDARGHRPIDRKREELPSLRPAPPPISGGGYR) is disordered. Residue tyrosine 4 is modified to Sulfotyrosine. Residues 10-26 (PDARGHRPIDRKREELP) show a composition bias toward basic and acidic residues. Residues 14–16 (GHR) form a beta-chain polymerization, binding distal domain of another fibrin region.

Heterohexamer; disulfide linked. Contains 2 sets of 3 non-identical chains (alpha, beta and gamma). The 2 heterotrimers are in head to head conformation with the N-termini in a small central domain. Post-translationally, conversion of fibrinogen to fibrin is triggered by thrombin, which cleaves fibrinopeptides A and B from alpha and beta chains, and thus exposes the N-terminal polymerization sites responsible for the formation of the soft clot.

Its subcellular location is the secreted. Cleaved by the protease thrombin to yield monomers which, together with fibrinogen alpha (FGA) and fibrinogen gamma (FGG), polymerize to form an insoluble fibrin matrix. Fibrin has a major function in hemostasis as one of the primary components of blood clots. In addition, functions during the early stages of wound repair to stabilize the lesion and guide cell migration during re-epithelialization. Was originally thought to be essential for platelet aggregation, based on in vitro studies using anticoagulated blood. However subsequent studies have shown that it is not absolutely required for thrombus formation in vivo. Enhances expression of SELP in activated platelets. Maternal fibrinogen is essential for successful pregnancy. Fibrin deposition is also associated with infection, where it protects against IFNG-mediated hemorrhage. May also facilitate the antibacterial immune response via both innate and T-cell mediated pathways. This is Fibrinogen beta chain (FGB) from Oryctolagus cuniculus (Rabbit).